Consider the following 492-residue polypeptide: Protein nucleotidyltransferase YdiU (492 aa).

8 residues coordinate ATP: Gly90, Gly92, Arg93, Lys113, Asp125, Gly126, Arg176, and Arg183. The active-site Proton acceptor is the Asp252. Asn253 and Asp262 together coordinate Mg(2+). Position 262 (Asp262) interacts with ATP.

This sequence belongs to the SELO family. The cofactor is Mg(2+). Requires Mn(2+) as cofactor.

It carries out the reaction L-seryl-[protein] + ATP = 3-O-(5'-adenylyl)-L-seryl-[protein] + diphosphate. It catalyses the reaction L-threonyl-[protein] + ATP = 3-O-(5'-adenylyl)-L-threonyl-[protein] + diphosphate. The enzyme catalyses L-tyrosyl-[protein] + ATP = O-(5'-adenylyl)-L-tyrosyl-[protein] + diphosphate. The catalysed reaction is L-histidyl-[protein] + UTP = N(tele)-(5'-uridylyl)-L-histidyl-[protein] + diphosphate. It carries out the reaction L-seryl-[protein] + UTP = O-(5'-uridylyl)-L-seryl-[protein] + diphosphate. It catalyses the reaction L-tyrosyl-[protein] + UTP = O-(5'-uridylyl)-L-tyrosyl-[protein] + diphosphate. Functionally, nucleotidyltransferase involved in the post-translational modification of proteins. It can catalyze the addition of adenosine monophosphate (AMP) or uridine monophosphate (UMP) to a protein, resulting in modifications known as AMPylation and UMPylation. The protein is Protein nucleotidyltransferase YdiU of Thioalkalivibrio sulfidiphilus (strain HL-EbGR7).